The following is a 346-amino-acid chain: Uroporphyrinogen decarboxylase (346 aa).

Substrate contacts are provided by residues Arg26–Arg30, Asp76, Tyr153, Ser208, and His323.

It belongs to the uroporphyrinogen decarboxylase family. In terms of assembly, homodimer.

It localises to the cytoplasm. The catalysed reaction is uroporphyrinogen III + 4 H(+) = coproporphyrinogen III + 4 CO2. It functions in the pathway porphyrin-containing compound metabolism; protoporphyrin-IX biosynthesis; coproporphyrinogen-III from 5-aminolevulinate: step 4/4. Functionally, catalyzes the decarboxylation of four acetate groups of uroporphyrinogen-III to yield coproporphyrinogen-III. The protein is Uroporphyrinogen decarboxylase of Prochlorococcus marinus (strain MIT 9301).